A 112-amino-acid polypeptide reads, in one-letter code: C-C motif chemokine 27 (112 aa).

The N-terminal stretch at 1-24 (MKGPPTFCSLLLLSLLLSPDPTAA) is a signal peptide. Cystine bridges form between Cys-33-Cys-62 and Cys-34-Cys-77.

Belongs to the intercrine beta (chemokine CC) family. As to quaternary structure, monomer, dimer, and tetramer. Heparin avidly promotes oligomerization. Interacts with TNFAIP6 (via Link domain). Testis, thymus, placenta, ovary and skin.

The protein resides in the secreted. In terms of biological role, chemotactic factor that attracts skin-associated memory T-lymphocytes. May play a role in mediating homing of lymphocytes to cutaneous sites. Binds to CCR10. This chain is C-C motif chemokine 27 (CCL27), found in Homo sapiens (Human).